The following is a 488-amino-acid chain: Glutamyl-tRNA(Gln) amidotransferase subunit A (488 aa).

Catalysis depends on charge relay system residues Lys77 and Ser152. Ser176 acts as the Acyl-ester intermediate in catalysis.

This sequence belongs to the amidase family. GatA subfamily. In terms of assembly, heterotrimer of A, B and C subunits.

The enzyme catalyses L-glutamyl-tRNA(Gln) + L-glutamine + ATP + H2O = L-glutaminyl-tRNA(Gln) + L-glutamate + ADP + phosphate + H(+). Functionally, allows the formation of correctly charged Gln-tRNA(Gln) through the transamidation of misacylated Glu-tRNA(Gln) in organisms which lack glutaminyl-tRNA synthetase. The reaction takes place in the presence of glutamine and ATP through an activated gamma-phospho-Glu-tRNA(Gln). This is Glutamyl-tRNA(Gln) amidotransferase subunit A from Streptococcus suis (strain 05ZYH33).